Consider the following 380-residue polypeptide: 3-dehydroquinate synthase (380 aa).

It belongs to the archaeal-type DHQ synthase family.

It carries out the reaction 2-amino-2,3,7-trideoxy-D-lyxo-hept-6-ulosonate + NAD(+) + H2O = 3-dehydroquinate + NH4(+) + NADH + H(+). Its function is as follows. Catalyzes the oxidative deamination and cyclization of 2-amino-3,7-dideoxy-D-threo-hept-6-ulosonic acid (ADH) to yield 3-dehydroquinate (DHQ), which is fed into the canonical shikimic pathway of aromatic amino acid biosynthesis. This is 3-dehydroquinate synthase from Methanosarcina barkeri (strain Fusaro / DSM 804).